We begin with the raw amino-acid sequence, 530 residues long: Glucose-6-phosphate isomerase (530 aa).

Residue Glu356 is the Proton donor of the active site. Active-site residues include His387 and Lys502.

It belongs to the GPI family.

The protein resides in the cytoplasm. It catalyses the reaction alpha-D-glucose 6-phosphate = beta-D-fructose 6-phosphate. Its pathway is carbohydrate biosynthesis; gluconeogenesis. It functions in the pathway carbohydrate degradation; glycolysis; D-glyceraldehyde 3-phosphate and glycerone phosphate from D-glucose: step 2/4. Functionally, catalyzes the reversible isomerization of glucose-6-phosphate to fructose-6-phosphate. In Borreliella afzelii (strain PKo) (Borrelia afzelii), this protein is Glucose-6-phosphate isomerase.